Consider the following 164-residue polypeptide: Pyruvoyl-dependent arginine decarboxylase (164 aa).

Serine 52 carries the pyruvic acid (Ser) modification.

Belongs to the PdaD family. It depends on pyruvate as a cofactor.

It catalyses the reaction L-arginine + H(+) = agmatine + CO2. The protein is Pyruvoyl-dependent arginine decarboxylase of Methanococcus maripaludis (strain C7 / ATCC BAA-1331).